We begin with the raw amino-acid sequence, 132 residues long: Small ribosomal subunit protein uS8 (132 aa).

Belongs to the universal ribosomal protein uS8 family. In terms of assembly, part of the 30S ribosomal subunit. Contacts proteins S5 and S12.

In terms of biological role, one of the primary rRNA binding proteins, it binds directly to 16S rRNA central domain where it helps coordinate assembly of the platform of the 30S subunit. This Bacillus licheniformis (strain ATCC 14580 / DSM 13 / JCM 2505 / CCUG 7422 / NBRC 12200 / NCIMB 9375 / NCTC 10341 / NRRL NRS-1264 / Gibson 46) protein is Small ribosomal subunit protein uS8.